The following is a 75-amino-acid chain: Mating pheromone Er-1/Er-3 (75 aa).

Residues 1–19 (MNKLAILAIIAMVLFSANA) form the signal peptide. A propeptide spanning residues 20–35 (FRFQSRLRSNVEAKTG) is cleaved from the precursor. 3 disulfide bridges follow: C38/C54, C45/C71, and C50/C63.

Homodimer.

It is found in the secreted. It localises to the cell membrane. Mating ciliate pheromones (or gamones) are diffusible extracellular communication signals that distinguish different intraspecific classes of cells commonly referred to as 'mating types'. They prepare the latter for conjugation by changing their cell surface properties. The membrane-bound form promotes inter-cellular communication and adhesion for mating pair formation and may act as binding site for the secreted form. This chain is Mating pheromone Er-1/Er-3 (MAT1), found in Euplotes raikovi.